The primary structure comprises 231 residues: DNA mismatch repair protein MutH (231 aa).

The protein belongs to the MutH family.

The protein localises to the cytoplasm. Its function is as follows. Sequence-specific endonuclease that cleaves unmethylated GATC sequences. It is involved in DNA mismatch repair. This chain is DNA mismatch repair protein MutH, found in Klebsiella pneumoniae subsp. pneumoniae (strain ATCC 700721 / MGH 78578).